The following is a 498-amino-acid chain: Glycerol kinase (498 aa).

T13 provides a ligand contact to ADP. 3 residues coordinate ATP: T13, T14, and S15. T13 provides a ligand contact to sn-glycerol 3-phosphate. R17 contacts ADP. The sn-glycerol 3-phosphate site is built by R83, E84, Y135, and D244. Glycerol-binding residues include R83, E84, Y135, D244, and Q245. Positions 266 and 309 each coordinate ADP. ATP-binding residues include T266, G309, Q313, and G410. G410 and N414 together coordinate ADP.

The protein belongs to the FGGY kinase family.

It catalyses the reaction glycerol + ATP = sn-glycerol 3-phosphate + ADP + H(+). The protein operates within polyol metabolism; glycerol degradation via glycerol kinase pathway; sn-glycerol 3-phosphate from glycerol: step 1/1. With respect to regulation, inhibited by fructose 1,6-bisphosphate (FBP). Functionally, key enzyme in the regulation of glycerol uptake and metabolism. Catalyzes the phosphorylation of glycerol to yield sn-glycerol 3-phosphate. The chain is Glycerol kinase from Koribacter versatilis (strain Ellin345).